The chain runs to 545 residues: MNTPRCDQTAAWAALAAHHQGAGRQFDLRTAFGADAGRFDAFSLQAPEVFADLSKNHWDATTRGLLLGLARQCQIESRRDAMLAGEPINHTEGRAVLHTALRAPRGAAPFSDDVHGVLDAMLAYVEQVRDTATSGIKHVVNIGIGGSDLGPQMVVPALDAYAQRGLQLHFVSNVDGHDIAPVLRDLNPRETLVIVASKTFTTQETMANAQVARTWFLAGYGEGGEAAIAKHFAASTTNVAAAAKFGITTTFGFWDWVGGRYSLWSAIGLPIALAVGAENFRALLAGAHAMDRHFATAPLESNLPIQLGLLDVWYRNFLGYTSRSIAPYHQGLRRLPAYLQQLEMESNGKCVDLDGASLPYGTCPVVWGEAGTNGQHAYFQMLHQGTDVIPVEFIAVKTPNHGPDVADELKAGLADQHVKLLANCLAQSQALMLGKTTDDALTDKAPTASTALDALTVARHRTFPGNRPSSTLVLDRLSPASLGALIALYEHRVYTSGALWGINSFDQWGVELGKALCNQLLPRFASGESAGLDASTAGLLARLRG.

Catalysis depends on glutamate 345, which acts as the Proton donor. Catalysis depends on residues histidine 376 and lysine 514.

Belongs to the GPI family.

It is found in the cytoplasm. It catalyses the reaction alpha-D-glucose 6-phosphate = beta-D-fructose 6-phosphate. The protein operates within carbohydrate biosynthesis; gluconeogenesis. It participates in carbohydrate degradation; glycolysis; D-glyceraldehyde 3-phosphate and glycerone phosphate from D-glucose: step 2/4. Functionally, catalyzes the reversible isomerization of glucose-6-phosphate to fructose-6-phosphate. The sequence is that of Glucose-6-phosphate isomerase from Leptothrix cholodnii (strain ATCC 51168 / LMG 8142 / SP-6) (Leptothrix discophora (strain SP-6)).